The chain runs to 142 residues: Large ribosomal subunit protein uL13 (142 aa).

The protein belongs to the universal ribosomal protein uL13 family. As to quaternary structure, part of the 50S ribosomal subunit.

Its function is as follows. This protein is one of the early assembly proteins of the 50S ribosomal subunit, although it is not seen to bind rRNA by itself. It is important during the early stages of 50S assembly. The protein is Large ribosomal subunit protein uL13 of Dictyoglomus thermophilum (strain ATCC 35947 / DSM 3960 / H-6-12).